We begin with the raw amino-acid sequence, 195 residues long: Holliday junction branch migration complex subunit RuvA (195 aa).

The tract at residues 1–64 is domain I; sequence MIASIRGVIQ…EDALTLYGFS (64 aa). The segment at 65-139 is domain II; the sequence is DNAQRSLFEQ…GKIDFRQLAA (75 aa). Residues 139–143 form a flexible linker region; the sequence is ASGST. Residues 144–195 form a domain III region; it reads SVSALDRELSEILVSLGYSAAEAAAAIASLPSDAPPTLEERLRLALRYFGSA.

The protein belongs to the RuvA family. In terms of assembly, homotetramer. Forms an RuvA(8)-RuvB(12)-Holliday junction (HJ) complex. HJ DNA is sandwiched between 2 RuvA tetramers; dsDNA enters through RuvA and exits via RuvB. An RuvB hexamer assembles on each DNA strand where it exits the tetramer. Each RuvB hexamer is contacted by two RuvA subunits (via domain III) on 2 adjacent RuvB subunits; this complex drives branch migration. In the full resolvosome a probable DNA-RuvA(4)-RuvB(12)-RuvC(2) complex forms which resolves the HJ.

It is found in the cytoplasm. Its function is as follows. The RuvA-RuvB-RuvC complex processes Holliday junction (HJ) DNA during genetic recombination and DNA repair, while the RuvA-RuvB complex plays an important role in the rescue of blocked DNA replication forks via replication fork reversal (RFR). RuvA specifically binds to HJ cruciform DNA, conferring on it an open structure. The RuvB hexamer acts as an ATP-dependent pump, pulling dsDNA into and through the RuvAB complex. HJ branch migration allows RuvC to scan DNA until it finds its consensus sequence, where it cleaves and resolves the cruciform DNA. The chain is Holliday junction branch migration complex subunit RuvA from Chloroflexus aggregans (strain MD-66 / DSM 9485).